We begin with the raw amino-acid sequence, 238 residues long: tRNA (guanine-N(1)-)-methyltransferase (238 aa).

Residues Gly112 and Leu131–Leu136 each bind S-adenosyl-L-methionine.

Belongs to the RNA methyltransferase TrmD family. In terms of assembly, homodimer.

It is found in the cytoplasm. The enzyme catalyses guanosine(37) in tRNA + S-adenosyl-L-methionine = N(1)-methylguanosine(37) in tRNA + S-adenosyl-L-homocysteine + H(+). Functionally, specifically methylates guanosine-37 in various tRNAs. In Nostoc punctiforme (strain ATCC 29133 / PCC 73102), this protein is tRNA (guanine-N(1)-)-methyltransferase.